Reading from the N-terminus, the 438-residue chain is Actin-like protein 7A (438 aa).

Residues 36-56 (ASLKDGPAKRAVWVRRDHSEP) are required for interaction with TES.

The protein belongs to the actin family. In terms of assembly, interacts (via N-terminus) with TES (via LIM domain 2). Heterodimer with TES; the heterodimer interacts with ENAH to form a heterotrimer. Interacts with ACTL9. Interacts with CYLC1; the interaction may be relevant for proper acrosome attachment to the nuclear envelope.

The protein localises to the cytoplasm. The protein resides in the cytoskeleton. Its subcellular location is the golgi apparatus. It localises to the nucleus. Functionally, essential for normal spermatogenesis and male fertility. Required for normal sperm head morphology, acroplaxome formation, acrosome attachment, and acrosome granule stability. May anchor and stabilize acrosomal adherence to the acroplaxome at least in part by facilitating the presence of F-actin in the subacrosomal space. May play an important role in formation and fusion of Golgi-derived vesicles during acrosome biogenesis. The sequence is that of Actin-like protein 7A (ACTL7A) from Bos taurus (Bovine).